We begin with the raw amino-acid sequence, 91 residues long: uncharacterized protein (91 aa).

The chain crosses the membrane as a helical span at residues 7–23 (IALVGVVVVLFGALRYQ).

The protein resides in the membrane. This is an uncharacterized protein from Haemophilus influenzae (strain ATCC 51907 / DSM 11121 / KW20 / Rd).